The following is a 315-amino-acid chain: Neurogenic differentiation factor 4 (315 aa).

Residues 39–71 (ERGSIDGEEDDEEEEDGEKPKKRGPKKKKMTKA) are disordered. Positions 44–55 (DGEEDDEEEEDG) are enriched in acidic residues. The span at 58-70 (PKKRGPKKKKMTK) shows a compositional bias: basic residues. In terms of domain architecture, bHLH spans 78-130 (VRRVKANARERSRMHGLNDALENLRRVMPCYSKTQKLSKIETLRLARNYIWAL). Serine 89 carries the post-translational modification Phosphoserine.

As to quaternary structure, efficient DNA binding requires dimerization with another bHLH protein. Forms a heterodimer with the bHLH protein hes2, and weakly interacts with hey1/hrt1. Post-translationally, serine or threonine phosphorylation within the basic region may regulate neurogenic activity. First expressed weakly at stage 12 in primary neuronal precursors. At stages 18 and 21, strongly expressed in the cranial ganglions, with weaker expression remaining in the spinal cord. Later, strongly expressed at sites of neuronal differentiation, namely the eye, forebrain and cranial ganglions.

It is found in the nucleus. Functionally, probably acts as a transcriptional activator. Mediates neuronal differentiation. Required for the regulation of amacrine cell fate specification in the retina. This chain is Neurogenic differentiation factor 4 (neurod4), found in Xenopus laevis (African clawed frog).